A 315-amino-acid chain; its full sequence is D-alanine--D-alanine ligase (315 aa).

Residues Lys101–Glu297 form the ATP-grasp domain. Lys128–His181 lines the ATP pocket. Residues Asp249, Glu263, and Asn265 each contribute to the Mg(2+) site.

This sequence belongs to the D-alanine--D-alanine ligase family. Mg(2+) is required as a cofactor. The cofactor is Mn(2+).

It localises to the cytoplasm. It catalyses the reaction 2 D-alanine + ATP = D-alanyl-D-alanine + ADP + phosphate + H(+). It functions in the pathway cell wall biogenesis; peptidoglycan biosynthesis. Its function is as follows. Cell wall formation. This Wolbachia pipientis wMel protein is D-alanine--D-alanine ligase.